The sequence spans 166 residues: Small ribosomal subunit protein uS5 (166 aa).

The region spanning 11–74 is the S5 DRBM domain; it reads LQEKLIAVNR…EKARRNMMNV (64 aa).

This sequence belongs to the universal ribosomal protein uS5 family. Part of the 30S ribosomal subunit. Contacts proteins S4 and S8.

With S4 and S12 plays an important role in translational accuracy. In terms of biological role, located at the back of the 30S subunit body where it stabilizes the conformation of the head with respect to the body. The chain is Small ribosomal subunit protein uS5 from Buchnera aphidicola subsp. Acyrthosiphon kondoi (Acyrthosiphon kondoi symbiotic bacterium).